The chain runs to 192 residues: UPF0312 protein Pput_4854 (192 aa).

An N-terminal signal peptide occupies residues 1-23; the sequence is MLKKTFAALALGTALLSAGQAMA.

Belongs to the UPF0312 family. Type 1 subfamily.

It localises to the periplasm. This Pseudomonas putida (strain ATCC 700007 / DSM 6899 / JCM 31910 / BCRC 17059 / LMG 24140 / F1) protein is UPF0312 protein Pput_4854.